The chain runs to 194 residues: Bis(5'-nucleosyl)-tetraphosphatase, symmetrical (194 aa).

In terms of domain architecture, HD spans 18–132 (RYNHSLRVAE…IFIADYIEPG (115 aa)). His-21 lines the ADP pocket. Residues His-21, His-50, and Asp-51 each coordinate Fe cation. Residues 51-54 (DFCK), His-83, 109-110 (HT), Asp-127, Arg-133, and 172-177 (TVYNKT) contribute to the ADP site. Residue Asp-127 participates in Fe cation binding.

This sequence belongs to the Ap4A hydrolase YqeK family. In terms of assembly, homodimer.

The enzyme catalyses P(1),P(4)-bis(5'-adenosyl) tetraphosphate + H2O = 2 ADP + 2 H(+). With respect to regulation, inhibited by EDTA. Hydrolyzes diadenosine 5',5'''-P1,P4-tetraphosphate (Ap4A) to yield ADP. Can also hydrolyze Ap3A, Ap5A, Ap4G, Ap4U and Gp4G, always releasing ADP or GDP as one of the products, but it exhibits a marked preference for Ap4A, which is mainly exerted at the substrate affinity level. The chain is Bis(5'-nucleosyl)-tetraphosphatase, symmetrical from Staphylococcus aureus (strain NCTC 8325 / PS 47).